The chain runs to 135 residues: MRDPKVIQAEIAKLEAELEDVKYHEAKTRSAVHILKNLGWTWTRQTGWKKPEVTKLSHKVFDKDTMTHIKAGDWVKVDMGVVGGYGYVRSVSGKYAQVSYITGVTPRGAIVADKTNMIHTGFLTVVSYEEIVKSR.

The protein is Protein 4.7 of Escherichia coli (Bacteriophage T7).